Consider the following 422-residue polypeptide: Ubiquitin-conjugating enzyme E2 Q1 (422 aa).

Methionine 1 is modified (N-acetylmethionine). Over residues 1–24 (MQQPQPQGQQQPGPGQQLGVQGAA) the composition is skewed to low complexity. Disordered stretches follow at residues 1 to 40 (MQQP…PGPC) and 173 to 221 (QPLP…EDDG). Gly residues predominate over residues 25-35 (PGAGGGPGGGP). Residues 185–200 (VSSEDEDEEMPEDTED) are compositionally biased toward acidic residues. Residues 212 to 221 (AEGKKSEDDG) are compositionally biased toward basic and acidic residues. A UBC core domain is found at 251 to 415 (QATDRLMKEL…VQIHEKNGWY (165 aa)). Residue cysteine 351 is the Glycyl thioester intermediate of the active site.

The protein belongs to the ubiquitin-conjugating enzyme family. Monomer and homodimer. Only the homodimer is linked to ubiquitin through thiolester activation. Interacts (via N-terminus) with B4GALT1 (via N-terminal cytoplasmic domain); the interaction is direct. In terms of processing, autoubiquitinated in vitro in the presence of NEDD4L. Expressed in liver, brain, heart, spleen, lung, kidney, muscle, ovary, epididymis, testis and placenta. Also expressed in thymus and ES cells. Only expressed in the uterus during pregnancy. Expressed in oocytes and during subsequent embryonic development stages (4-cell stage, blastocyst, 8.5 dpc, 13.5 dpc, 16.5 dpc and 18.5 dpc).

It localises to the nucleus. It is found in the cell projection. The protein localises to the filopodium. The protein resides in the cytoplasm. Its subcellular location is the cytosol. It catalyses the reaction S-ubiquitinyl-[E1 ubiquitin-activating enzyme]-L-cysteine + [E2 ubiquitin-conjugating enzyme]-L-cysteine = [E1 ubiquitin-activating enzyme]-L-cysteine + S-ubiquitinyl-[E2 ubiquitin-conjugating enzyme]-L-cysteine.. The protein operates within protein modification; protein ubiquitination. In terms of biological role, catalyzes the covalent attachment of ubiquitin to other proteins. Involved in female fertility and embryo implantation. May be involved in hormonal homeostasis in females. Involved in regulation of B4GALT1 cell surface expression, B4GALT1-mediated cell adhesion to laminin and embryoid body formation. This Mus musculus (Mouse) protein is Ubiquitin-conjugating enzyme E2 Q1 (Ube2q1).